The chain runs to 156 residues: Cyanate hydratase (156 aa).

Active-site residues include Arg-96, Glu-99, and Ser-122.

It belongs to the cyanase family.

The catalysed reaction is cyanate + hydrogencarbonate + 3 H(+) = NH4(+) + 2 CO2. In terms of biological role, catalyzes the reaction of cyanate with bicarbonate to produce ammonia and carbon dioxide. The polypeptide is Cyanate hydratase (Burkholderia thailandensis (strain ATCC 700388 / DSM 13276 / CCUG 48851 / CIP 106301 / E264)).